A 578-amino-acid chain; its full sequence is Aspartate--tRNA ligase (578 aa).

L-aspartate is bound at residue Glu-169. Residues Gln-191–Lys-194 are aspartate. Residue Arg-213 participates in L-aspartate binding. Residues Arg-213–Glu-215 and Gln-222 each bind ATP. His-440 serves as a coordination point for L-aspartate. Glu-474 lines the ATP pocket. Residue Arg-481 participates in L-aspartate binding. Gly-526–Arg-529 serves as a coordination point for ATP.

This sequence belongs to the class-II aminoacyl-tRNA synthetase family. Type 1 subfamily. In terms of assembly, homodimer.

It localises to the cytoplasm. The enzyme catalyses tRNA(Asp) + L-aspartate + ATP = L-aspartyl-tRNA(Asp) + AMP + diphosphate. Catalyzes the attachment of L-aspartate to tRNA(Asp) in a two-step reaction: L-aspartate is first activated by ATP to form Asp-AMP and then transferred to the acceptor end of tRNA(Asp). This Ureaplasma parvum serovar 3 (strain ATCC 700970) protein is Aspartate--tRNA ligase.